Here is a 529-residue protein sequence, read N- to C-terminus: MAAIPSHNNLLTINHKNSITGSSSLNTNFSEINFPAKFRVATRALSRTDESSLSAVISRLERERRERQGLLIEEAEGAGELWMTAEDIRRRDKKTEEERRLRDTWRKIQGEDDWAGLMDPMDPILRSELIRYGEMAQACYDAFDFDPASKYCGTSRFTRLEFFDSLGMIDSGYEVARYLYATSNINLPNFFSKSRWSKVWSKNANWMGYVAVSDDETSRNRLGRRDIAIAWRGTVTKLEWIADLKDYLKPVTENKIRCPDPAVKVESGFLDLYTDKDTTCKFARFSAREQILTEVKRLVEEHGDDDDSDLSITVTGHSLGGALAILSAYDIAEMRLNRSKKGKVIPVTVLTYGGPRVGNVRFRERMEELGVKVMRVVNVHDVVPKSPGLFLNESRPHALMKIAEGLPWCYSHVGEELALDHQNSPFLKPSVDVSTAHNLEAMLHLLDGYHGKGERFVLSSGRDHALVNKASDFLKEHLQIPPFWRQDANKGMVRNSEGRWIQAERLRFEDHHSPDIHHHLSQLRLDHPC.

A chloroplast-targeting transit peptide spans 1–43; that stretch reads MAAIPSHNNLLTINHKNSITGSSSLNTNFSEINFPAKFRVATR. The GXSXG motif lies at 316–320; it reads GHSLG. Residue Ser318 is the Acyl-ester intermediate of the active site. Catalysis depends on charge relay system residues Asp381 and His437.

This sequence belongs to the AB hydrolase superfamily. Lipase family. In terms of assembly, interacts with SBP1. Widely expressed. Highly expressed in leaves and stems.

The protein localises to the plastid. It localises to the chloroplast. The catalysed reaction is 1,2-dihexadecanoyl-sn-glycero-3-phosphocholine + H2O = 2-hexadecanoyl-sn-glycero-3-phosphocholine + hexadecanoate + H(+). It catalyses the reaction a 1,2-diacyl-3-O-(beta-D-galactosyl)-sn-glycerol + H2O = an acyl-3-O-(beta-D-galactosyl)-sn-glycerol + a fatty acid + H(+). The enzyme catalyses a 1,2-diacyl-3-O-[alpha-D-galactosyl-(1-&gt;6)-beta-D-galactosyl]-sn-glycerol + H2O = acyl-3-O-[alpha-D-galactosyl-(1-&gt;6)-beta-D-galactosyl]-sn-glycerol + a fatty acid + H(+). It carries out the reaction a triacylglycerol + H2O = a diacylglycerol + a fatty acid + H(+). Acylhydrolase with broad specificity. Catalyzes the hydrolysis of phosphatidylcholine at the sn-1 position. Possesses moderate activity toward phosphatidylcholine (PC), monogalactosyldiacylglycerol (MGDG), digalactosyldiacylglycerol (DGDG) and triacylglycerol (TAG). This chain is Phospholipase A1-Igamma2, chloroplastic, found in Arabidopsis thaliana (Mouse-ear cress).